A 567-amino-acid polypeptide reads, in one-letter code: Geranylgeranyl transferase type-2 subunit alpha (567 aa).

6 PFTA repeats span residues 44-78 (LDESVLELTSQILGANPDFATLWNCRREVLQQLET), 88-122 (LVKAELGFLESCLRVNPKSYGTWHHRCWLLGRLPE), 124-158 (NWTRELELCARFLEVDERNFHCWDYRRFVATQAAV), 159-193 (PPAEELAFTDSLITRNFSNYSSWHYRSCLLPQLHP), 207-241 (VLLKELELVQNAFFTDPNDQSAWFYHRWLLGRADP), and 363-397 (VLQSELESCKELQELEPENKWCLLTIILLMRALDP). Ser98 carries the phosphoserine modification. 5 LRR repeats span residues 442 to 463 (EVRVLHLAHKDLTVLCHLEQLL), 464 to 486 (LVTHLDLSHNRLRTLPPALAALR), 487 to 508 (CLEVLQASDNAIESLDGVTNLP), 509 to 530 (RLQELLLCNNRLQRPAVLQPLA), and 534 to 555 (RLVLLNLQGNPLCQAVGILEQL).

It belongs to the protein prenyltransferase subunit alpha family. In terms of assembly, heterotrimer composed of RABGGTA, RABGGTB and CHM; within this trimer, RABGGTA and RABGGTB form the catalytic component B, while CHM (component A) mediates peptide substrate binding. The Rab GGTase dimer (RGGT) interacts with CHM (component A) prior to Rab protein binding; the association is stabilized by geranylgeranyl pyrophosphate (GGpp). The CHM:RGGT:Rab complex is destabilized by GGpp. Interacts with non-phosphorylated form of RAB8A; phosphorylation of RAB8A at 'Thr-72' disrupts this interaction.

It catalyses the reaction geranylgeranyl diphosphate + L-cysteinyl-[protein] = S-geranylgeranyl-L-cysteinyl-[protein] + diphosphate. With respect to regulation, the enzymatic reaction requires the aid of a Rab escort protein (also called component A), such as CHM. Its function is as follows. Catalyzes the transfer of a geranylgeranyl moiety from geranylgeranyl diphosphate to both cysteines of Rab proteins with the C-terminal sequence -XXCC, -XCXC and -CCXX, such as RAB1A, RAB3A, RAB5A and RAB7A. This is Geranylgeranyl transferase type-2 subunit alpha (RABGGTA) from Pongo abelii (Sumatran orangutan).